A 406-amino-acid polypeptide reads, in one-letter code: Mitochondrial potassium channel (406 aa).

Residues 1–35 (MTGCSPVFAMQHVVGVPRILVRRTFLGTDVTMTRT) constitute a mitochondrion transit peptide. At 36–198 (LCSPGPREKR…KERTRAERTK (163 aa)) the chain is on the mitochondrial matrix side. Residues 113 to 140 (VREAREGLEAQQTKLKEVRDRLDRVSRE) are a coiled coil. A helical membrane pass occupies residues 199–219 (NWSLIGSVLGALIGVAGSTYV). The Mitochondrial intermembrane portion of the chain corresponds to 220–382 (NRVRLQELKA…LEAQANRNTV (163 aa)). The helical transmembrane segment at 383–403 (SSTLVTCVTFLATLPLLYMLF) threads the bilayer. The Mitochondrial matrix portion of the chain corresponds to 404-406 (KTS).

As to quaternary structure, the mitochondrial potassium channel (mitoK(ATP)) is composed of 4 subunits of CCDC51/MITOK and 4 subunits of ABCB8/MITOSUR.

It is found in the mitochondrion inner membrane. It catalyses the reaction K(+)(in) = K(+)(out). Its activity is regulated as follows. Inhibited by ATP via mitoK(ATP) channel. In terms of biological role, pore-forming subunit of the mitochondrial ATP-gated potassium channel (mitoK(ATP)). Together with ATP-binding subunit ABCB8/MITOSUR of the mitoK(ATP) channel, mediates ATP-dependent K(+) currents across the mitochondrial inner membrane. An increase in ATP intracellular levels closes the channel, inhibiting K(+) transport, whereas a decrease in ATP levels enhances K(+) uptake in the mitochondrial matrix. May contribute to the homeostatic control of cellular metabolism under stress conditions by regulating the mitochondrial matrix volume. This chain is Mitochondrial potassium channel, found in Mus musculus (Mouse).